Reading from the N-terminus, the 504-residue chain is Immunoglobulin-binding protein EibC (504 aa).

Positions 1–26 (MSKKFTMTLLSSSLAGLLVMSGGVSA) are cleaved as a signal peptide. Residues 27–413 (QEEKYTVPYA…IAANTRTLQQ (387 aa)) are surface exposed passenger domain. Residues 27–453 (QEEKYTVPYA…GLFQPYSVGK (427 aa)) lie on the Extracellular side of the membrane. Positions 154-280 (DAKASGEFSV…TGTESDKTYG (127 aa)) are head domain. The neck stretch occupies residues 281-296 (TRVLGGLSDGTRNSDA). The tract at residues 297 to 342 (ATVGQLNRKVGGVYDDVKARITVESEKQKKYTDQKTSEVNEKVEAR) is right-handed coiled-coil (RHcc). The segment at 343 to 368 (TTVGVDSDGKLTRAEGATKTIAVNDG) is saddle domain. The interval 369-434 (LVALSGRTDR…INENHKEMKR (66 aa)) is left-handed coiled-coil (LHcc). Residues 411 to 438 (LQQHSARLDSQQRQINENHKEMKRAAAQ) adopt a coiled-coil conformation. The tract at residues 411–453 (LQQHSARLDSQQRQINENHKEMKRAAAQSAALTGLFQPYSVGK) is outer membrane translocation of the passenger domain. Beta stranded transmembrane passes span 454–464 (FNATAAVGGYS), 467–478 (QALAVGVGYRFN), 481–490 (TAAKAGVAFS), and 494–504 (ASWNVGVNFEF). The interval 454 to 504 (FNATAAVGGYSDQQALAVGVGYRFNEQTAAKAGVAFSDGDASWNVGVNFEF) is translocator domain.

The protein belongs to the autotransporter-2 (AT-2) (TC 1.B.40) family. Eib subfamily. Homotrimer; can probably form mixed heterotrimers in vivo. Will form mixed heterotrimers with EibD; these are correctly located in the outer membrane and bind IgG Fc, although less well than homotrimers. In denaturing gels runs as a band of about 200 kDa. Binds the Fc portion of immunoglobulins; binds more than 1 Fc per subunit.

It is found in the cell surface. The protein localises to the cell outer membrane. In terms of biological role, binds (in a non-immune fashion) to the Fc portion of human IgG and less well to IgA; binding occurs on the cell surface. Confers the ability to survive exposure to human serum exposure. Binds to the Fc portion of human IgG and IgA and to whole mouse antibodies also via Fc. In Escherichia coli, this protein is Immunoglobulin-binding protein EibC.